Here is an 856-residue protein sequence, read N- to C-terminus: Protein phosphatase 2C 32 (856 aa).

Ser152, Ser189, and Ser201 each carry phosphoserine. In terms of domain architecture, PPM-type phosphatase spans 269 to 835; sequence ESCLESNRNL…DDVSVMVVSL (567 aa). Mn(2+) is bound by residues Asp307 and Gly308. Disordered regions lie at residues 340 to 373, 388 to 407, and 446 to 485; these read PSEDNQLQPDQEPPTEENMCDPESISEQHSKSVV, GNTDTQIADGPPGDSAGPGK, and NPSTSGGGAGNDPCTTDRSALDGIPNSGQRHGTKKSQISS. A compositionally biased stretch (low complexity) spans 395–407; that stretch reads ADGPPGDSAGPGK. Residues 471–485 show a composition bias toward polar residues; that stretch reads NSGQRHGTKKSQISS. 2 residues coordinate Mn(2+): Asp763 and Asp826.

This sequence belongs to the PP2C family. Mg(2+) serves as cofactor. It depends on Mn(2+) as a cofactor. As to expression, expressed in roots, leaves, stems, inflorescences, flowers and throughout the shoot meristem.

It localises to the nucleus. It carries out the reaction O-phospho-L-seryl-[protein] + H2O = L-seryl-[protein] + phosphate. The enzyme catalyses O-phospho-L-threonyl-[protein] + H2O = L-threonyl-[protein] + phosphate. Its activity is regulated as follows. Insensitive to okadaic acid. Its function is as follows. Involved in the regulation of pedicel length and of CLAVATA pathways controlling stem cell identity at shoot and flower meristems. The chain is Protein phosphatase 2C 32 (POL) from Arabidopsis thaliana (Mouse-ear cress).